A 663-amino-acid polypeptide reads, in one-letter code: Alpha-1,4-glucan:maltose-1-phosphate maltosyltransferase (663 aa).

Positions 238–266 (IGETNRKGPDDAPEAGPDDPGSPWAIGGF) are disordered. Alpha-maltose 1-phosphate is bound by residues Lys-244, Gln-309, and Asp-344. The active-site Nucleophile is the Asp-380. Alpha-maltose 1-phosphate is bound at residue Asn-381. Glu-409 acts as the Proton donor in catalysis. Residue 521–522 (KY) participates in alpha-maltose 1-phosphate binding.

This sequence belongs to the glycosyl hydrolase 13 family. GlgE subfamily. As to quaternary structure, homodimer.

The enzyme catalyses alpha-maltose 1-phosphate + [(1-&gt;4)-alpha-D-glucosyl](n) = [(1-&gt;4)-alpha-D-glucosyl](n+2) + phosphate. In terms of biological role, maltosyltransferase that uses maltose 1-phosphate (M1P) as the sugar donor to elongate linear or branched alpha-(1-&gt;4)-glucans. Is involved in a branched alpha-glucan biosynthetic pathway from trehalose, together with TreS, Mak and GlgB. This is Alpha-1,4-glucan:maltose-1-phosphate maltosyltransferase from Salinibacter ruber (strain DSM 13855 / M31).